A 420-amino-acid chain; its full sequence is Acetyl-CoA acetyltransferase B, mitochondrial (420 aa).

Residues 1–33 (MAFCGPRTAARLSHSTRALHYTHRSFASPRTLN) constitute a mitochondrion transit peptide. The active-site Acyl-thioester intermediate is C119. CoA-binding positions include Y212, 251–253 (RVD), and K256. Y212 serves as a coordination point for K(+). Positions 273 and 274 each coordinate K(+). S277 is a CoA binding site. Residue V374 coordinates K(+). The active-site Proton donor/acceptor is C406.

It belongs to the thiolase-like superfamily. Thiolase family. As to quaternary structure, homotetramer.

It localises to the mitochondrion. The catalysed reaction is 2 acetyl-CoA = acetoacetyl-CoA + CoA. The enzyme catalyses propanoyl-CoA + acetyl-CoA = 2-methyl-3-oxobutanoyl-CoA + CoA. It participates in lipid metabolism; fatty acid beta-oxidation. Its function is as follows. This is one of the enzymes that catalyzes the last step of the mitochondrial beta-oxidation pathway, an aerobic process breaking down fatty acids into acetyl-CoA. Using free coenzyme A/CoA, catalyzes the thiolytic cleavage of medium- to long-chain 3-oxoacyl-CoAs into acetyl-CoA and a fatty acyl-CoA shortened by two carbon atoms. The activity of the enzyme is reversible and it can also catalyze the condensation of two acetyl-CoA molecules into acetoacetyl-CoA. Thereby, it plays a major role in ketone body metabolism. This Xenopus laevis (African clawed frog) protein is Acetyl-CoA acetyltransferase B, mitochondrial (acat1-b).